A 156-amino-acid polypeptide reads, in one-letter code: ATP synthase subunit b (156 aa).

A helical membrane pass occupies residues 7 to 27 (LFVQAIVFAILVWFTMKFVWP).

This sequence belongs to the ATPase B chain family. In terms of assembly, F-type ATPases have 2 components, F(1) - the catalytic core - and F(0) - the membrane proton channel. F(1) has five subunits: alpha(3), beta(3), gamma(1), delta(1), epsilon(1). F(0) has three main subunits: a(1), b(2) and c(10-14). The alpha and beta chains form an alternating ring which encloses part of the gamma chain. F(1) is attached to F(0) by a central stalk formed by the gamma and epsilon chains, while a peripheral stalk is formed by the delta and b chains.

It localises to the cell inner membrane. F(1)F(0) ATP synthase produces ATP from ADP in the presence of a proton or sodium gradient. F-type ATPases consist of two structural domains, F(1) containing the extramembraneous catalytic core and F(0) containing the membrane proton channel, linked together by a central stalk and a peripheral stalk. During catalysis, ATP synthesis in the catalytic domain of F(1) is coupled via a rotary mechanism of the central stalk subunits to proton translocation. Its function is as follows. Component of the F(0) channel, it forms part of the peripheral stalk, linking F(1) to F(0). This is ATP synthase subunit b from Polaromonas sp. (strain JS666 / ATCC BAA-500).